A 79-amino-acid polypeptide reads, in one-letter code: Cytochrome b (79 aa).

Helical transmembrane passes span 1-7 (TALLLAM), 31-52 (WLIR…YLHI), and 67-79 (WNIG…TLMA). Heme b contacts are provided by histidine 37 and histidine 51.

This sequence belongs to the cytochrome b family. The cytochrome bc1 complex contains 11 subunits: 3 respiratory subunits (MT-CYB, CYC1 and UQCRFS1), 2 core proteins (UQCRC1 and UQCRC2) and 6 low-molecular weight proteins (UQCRH/QCR6, UQCRB/QCR7, UQCRQ/QCR8, UQCR10/QCR9, UQCR11/QCR10 and a cleavage product of UQCRFS1). This cytochrome bc1 complex then forms a dimer. It depends on heme b as a cofactor.

It is found in the mitochondrion inner membrane. Its function is as follows. Component of the ubiquinol-cytochrome c reductase complex (complex III or cytochrome b-c1 complex) that is part of the mitochondrial respiratory chain. The b-c1 complex mediates electron transfer from ubiquinol to cytochrome c. Contributes to the generation of a proton gradient across the mitochondrial membrane that is then used for ATP synthesis. The sequence is that of Cytochrome b (MT-CYB) from Corcorax melanoramphos (White-winged chough).